The sequence spans 271 residues: Aminoglycoside 3'-phosphotransferase (271 aa).

Aspartate 198 functions as the Proton acceptor in the catalytic mechanism.

It belongs to the aminoglycoside phosphotransferase family.

The catalysed reaction is kanamycin A + ATP = kanamycin 3'-phosphate + ADP + H(+). Resistance to kanamycin and structurally-related aminoglycosides, including amikacin. The polypeptide is Aminoglycoside 3'-phosphotransferase (Salmonella typhimurium).